We begin with the raw amino-acid sequence, 326 residues long: tRNA dimethylallyltransferase (326 aa).

Position 18–25 (18–25) interacts with ATP; sequence GPTASGKS. 20–25 is a binding site for substrate; that stretch reads TASGKS. Interaction with substrate tRNA regions lie at residues 43–46 and 167–171; these read DSMQ and QRIAR.

The protein belongs to the IPP transferase family. As to quaternary structure, monomer. Requires Mg(2+) as cofactor.

It catalyses the reaction adenosine(37) in tRNA + dimethylallyl diphosphate = N(6)-dimethylallyladenosine(37) in tRNA + diphosphate. Its function is as follows. Catalyzes the transfer of a dimethylallyl group onto the adenine at position 37 in tRNAs that read codons beginning with uridine, leading to the formation of N6-(dimethylallyl)adenosine (i(6)A). The chain is tRNA dimethylallyltransferase from Rhodospirillum rubrum (strain ATCC 11170 / ATH 1.1.1 / DSM 467 / LMG 4362 / NCIMB 8255 / S1).